The primary structure comprises 267 residues: L-aspartate dehydrogenase (267 aa).

2 residues coordinate NAD(+): Ala124 and Asn190. The active site involves His218.

The protein belongs to the L-aspartate dehydrogenase family.

It carries out the reaction L-aspartate + NADP(+) + H2O = oxaloacetate + NH4(+) + NADPH + H(+). It catalyses the reaction L-aspartate + NAD(+) + H2O = oxaloacetate + NH4(+) + NADH + H(+). It participates in cofactor biosynthesis; NAD(+) biosynthesis; iminoaspartate from L-aspartate (dehydrogenase route): step 1/1. In terms of biological role, specifically catalyzes the NAD or NADP-dependent dehydrogenation of L-aspartate to iminoaspartate. This is L-aspartate dehydrogenase from Methanocaldococcus jannaschii (strain ATCC 43067 / DSM 2661 / JAL-1 / JCM 10045 / NBRC 100440) (Methanococcus jannaschii).